The chain runs to 503 residues: Probable DNA ligase (503 aa).

D212 is a binding site for ATP. Catalysis depends on K214, which acts as the N6-AMP-lysine intermediate. ATP-binding residues include R219, R234, E263, F296, R368, and K374.

It belongs to the ATP-dependent DNA ligase family. It depends on Mg(2+) as a cofactor.

The enzyme catalyses ATP + (deoxyribonucleotide)n-3'-hydroxyl + 5'-phospho-(deoxyribonucleotide)m = (deoxyribonucleotide)n+m + AMP + diphosphate.. In terms of biological role, DNA ligase that seals nicks in double-stranded DNA during DNA replication, DNA recombination and DNA repair. This chain is Probable DNA ligase, found in Kineococcus radiotolerans (strain ATCC BAA-149 / DSM 14245 / SRS30216).